The chain runs to 148 residues: HTH-type transcriptional regulator Rv2324 (148 aa).

Residues 4 to 65 (LDDTDERILA…VVDRNALGWN (62 aa)) form the HTH asnC-type domain. Positions 23-42 (FAEIGHKVSLSAPAVKRRVD) form a DNA-binding region, H-T-H motif.

As to quaternary structure, homodimer. Forms oligomers.

The DNA-binding activity of Rv2324 is modulated by interaction of Rv2324 with amino acids. Aspartate is the only effector amino acid that completely abolishes DNA binding. The majority of amino acids induce a dimer-tetramer or dimer-hexamer oligomeric transition. In response to amino-acid binding, adopts an open quaternary association, which is a part of the functional requirement to bind to non-symmetrically distributed target DNA binding sites. Functionally, transcriptional regulator involved in growth, DNA replication and damage control. Plays a crucial role in regulating survival and growth of M.tuberculosis. Could function as a global regulator in both the latent/persistent and active phases of growth. Binds to its own promoter region and to promoters of multiple metabolic genes, such as serB2, lat, ald and roc operon. In vitro, interacts with intrinsically curved and non-curved DNA molecules, and with both supercoiled and linear DNA, with higher affinity for supercoiled DNA. Binds to DNA recombination, replication and repair intermediates. This chain is HTH-type transcriptional regulator Rv2324, found in Mycobacterium tuberculosis (strain ATCC 25618 / H37Rv).